Here is a 376-residue protein sequence, read N- to C-terminus: uncharacterized protein (376 aa).

The signal sequence occupies residues 1–22; it reads MVATGRIIITLLAAALDEIILA.

This sequence belongs to the ascovirus HvAV ORF17 family.

This is an uncharacterized protein from Heliothis virescens ascovirus 3e (HvAV-3e).